Reading from the N-terminus, the 172-residue chain is Protein GrpE (172 aa).

Positions Met1–Leu23 are disordered.

The protein belongs to the GrpE family. In terms of assembly, homodimer.

Its subcellular location is the cytoplasm. In terms of biological role, participates actively in the response to hyperosmotic and heat shock by preventing the aggregation of stress-denatured proteins, in association with DnaK and GrpE. It is the nucleotide exchange factor for DnaK and may function as a thermosensor. Unfolded proteins bind initially to DnaJ; upon interaction with the DnaJ-bound protein, DnaK hydrolyzes its bound ATP, resulting in the formation of a stable complex. GrpE releases ADP from DnaK; ATP binding to DnaK triggers the release of the substrate protein, thus completing the reaction cycle. Several rounds of ATP-dependent interactions between DnaJ, DnaK and GrpE are required for fully efficient folding. This chain is Protein GrpE, found in Xylella fastidiosa (strain M23).